Reading from the N-terminus, the 350-residue chain is Phosphoribosylformylglycinamidine cyclo-ligase (350 aa).

The protein belongs to the AIR synthase family.

Its subcellular location is the cytoplasm. The enzyme catalyses 2-formamido-N(1)-(5-O-phospho-beta-D-ribosyl)acetamidine + ATP = 5-amino-1-(5-phospho-beta-D-ribosyl)imidazole + ADP + phosphate + H(+). Its pathway is purine metabolism; IMP biosynthesis via de novo pathway; 5-amino-1-(5-phospho-D-ribosyl)imidazole from N(2)-formyl-N(1)-(5-phospho-D-ribosyl)glycinamide: step 2/2. In Cupriavidus metallidurans (strain ATCC 43123 / DSM 2839 / NBRC 102507 / CH34) (Ralstonia metallidurans), this protein is Phosphoribosylformylglycinamidine cyclo-ligase.